Reading from the N-terminus, the 462-residue chain is Chitinase-like mite allergen Der f 18.0101 (462 aa).

Residues 1-25 (MTRFSLTVLAVLAACFGSNIRPNVA) form the signal peptide. The GH18 domain occupies 29-378 (PKTVCYYESW…HAIQSNYYHG (350 aa)). C33 and C58 are joined by a disulfide. The N-linked (GlcNAc...) asparagine glycan is linked to N338. A Chitin-binding type-2 domain is found at 404 to 462 (VFHCHEEGFFRDKTYCATYYECKKGDFGLEKTVHHCANHLQAFDEVSRTCIDHTKIPGC). C439 and C453 are oxidised to a cystine.

The protein belongs to the glycosyl hydrolase 18 family. Chitinase class II subfamily. As to expression, expressed in the upper digestive tract. Staining is observed in the ventriculus, and in very rare individuals, also in the intestine or esophagus. No expression in fecal pellets neither inside the rectum nor defecated outside of the body.

It is found in the secreted. In terms of biological role, probably a non-catalytic chitinase-like protein, which binds to insoluble chitin and enhances the activity of the catalytic chitinases. Has weak chitin-binding activity. The sequence is that of Chitinase-like mite allergen Der f 18.0101 from Dermatophagoides farinae (American house dust mite).